The following is a 136-amino-acid chain: Large ribosomal subunit protein uL16 (136 aa).

The protein belongs to the universal ribosomal protein uL16 family. Part of the 50S ribosomal subunit.

In terms of biological role, binds 23S rRNA and is also seen to make contacts with the A and possibly P site tRNAs. The sequence is that of Large ribosomal subunit protein uL16 from Edwardsiella ictaluri (strain 93-146).